Consider the following 88-residue polypeptide: Small ribosomal subunit protein bS18 (88 aa).

Belongs to the bacterial ribosomal protein bS18 family. In terms of assembly, part of the 30S ribosomal subunit. Forms a tight heterodimer with protein bS6.

Functionally, binds as a heterodimer with protein bS6 to the central domain of the 16S rRNA, where it helps stabilize the platform of the 30S subunit. This is Small ribosomal subunit protein bS18 from Aliarcobacter butzleri (strain RM4018) (Arcobacter butzleri).